Reading from the N-terminus, the 307-residue chain is Acetaldehyde dehydrogenase (307 aa).

12–15 (SGNI) serves as a coordination point for NAD(+). Residue cysteine 130 is the Acyl-thioester intermediate of the active site. Residues 161–169 (SVGPGTRQN) and asparagine 272 each bind NAD(+).

Belongs to the acetaldehyde dehydrogenase family.

The enzyme catalyses acetaldehyde + NAD(+) + CoA = acetyl-CoA + NADH + H(+). The chain is Acetaldehyde dehydrogenase from Shewanella halifaxensis (strain HAW-EB4).